We begin with the raw amino-acid sequence, 607 residues long: Aspartate--tRNA(Asp/Asn) ligase (607 aa).

An L-aspartate-binding site is contributed by Glu-194. Positions 218 to 221 are aspartate; sequence QLFK. Arg-240 serves as a coordination point for L-aspartate. ATP is bound by residues 240–242 and Gln-249; that span reads RDE. His-468 serves as a coordination point for L-aspartate. Glu-502 lines the ATP pocket. Arg-509 contacts L-aspartate. Residue 554-557 participates in ATP binding; the sequence is GLDR.

The protein belongs to the class-II aminoacyl-tRNA synthetase family. Type 1 subfamily. Homodimer.

Its subcellular location is the cytoplasm. It carries out the reaction tRNA(Asx) + L-aspartate + ATP = L-aspartyl-tRNA(Asx) + AMP + diphosphate. Its function is as follows. Aspartyl-tRNA synthetase with relaxed tRNA specificity since it is able to aspartylate not only its cognate tRNA(Asp) but also tRNA(Asn). Reaction proceeds in two steps: L-aspartate is first activated by ATP to form Asp-AMP and then transferred to the acceptor end of tRNA(Asp/Asn). This is Aspartate--tRNA(Asp/Asn) ligase from Desulfotalea psychrophila (strain LSv54 / DSM 12343).